The following is a 145-amino-acid chain: uncharacterized protein (145 aa).

Belongs to the asfivirus K145R family.

The protein resides in the virion. This is an uncharacterized protein from Ornithodoros (relapsing fever ticks).